Here is a 644-residue protein sequence, read N- to C-terminus: Core protein VP4 (644 aa).

Belongs to the orbivirus VP4 family.

The protein resides in the virion. In terms of biological role, the VP4 protein is one of the five proteins (with VP1, VP3, VP6 and VP7) which form the inner capsid of the virus. The polypeptide is Core protein VP4 (Segment-4) (Bluetongue virus 13 (isolate USA) (BTV 13)).